The primary structure comprises 735 residues: Alpha-adducin (735 aa).

The residue at position 1 (Met1) is an N-acetylmethionine. Low complexity predominate over residues 1–11 (MNGDTRAAVVT). The tract at residues 1 to 21 (MNGDTRAAVVTSPPPTTAPHK) is disordered. Ser12, Ser59, and Ser64 each carry phosphoserine. A Phosphothreonine modification is found at Thr331. Phosphoserine occurs at positions 334, 353, and 355. Phosphothreonine is present on Thr358. A phosphoserine mark is found at Ser364, Ser366, Ser408, and Ser427. Disordered regions lie at residues 418-487 (GHSF…AVPN) and 576-735 (RREV…KSDS). At Thr429 the chain carries Phosphothreonine. Residues Ser431 and Ser436 each carry the phosphoserine modification. The span at 440 to 455 (QQREKTRWLHSGRGDD) shows a compositional bias: basic and acidic residues. Residue Thr445 is modified to Phosphothreonine; by ROCK2. Residues Ser464 and Ser465 each carry the phosphoserine modification. Thr480 carries the post-translational modification Phosphothreonine; by ROCK2. Ser481 is modified (phosphoserine; by PKA). Over residues 576 to 601 (RREVERKQKGSEENLDETREQKEKSP) the composition is skewed to basic and acidic residues. Residues Ser586, Ser600, and Ser605 each carry the phosphoserine modification. Phosphothreonine is present on Thr610. The residue at position 613 (Ser613) is a Phosphoserine. Thr614 is modified (phosphothreonine). Residues 698-712 (GSPMDPGSDGSPGKS) show a composition bias toward low complexity. A phosphoserine mark is found at Ser705, Ser708, and Ser712. Over residues 713 to 735 (PSKKKKKFRTPSFLKKSKKKSDS) the composition is skewed to basic residues. Position 714 is a phosphoserine; by PKC (Ser714). The interaction with calmodulin stretch occupies residues 715-732 (KKKKKFRTPSFLKKSKKK). Ser724 bears the Phosphoserine; by PKA and PKC mark.

This sequence belongs to the aldolase class II family. Adducin subfamily. Heterodimer of an alpha and a beta subunit or an alpha and a gamma subunit.

The protein resides in the cytoplasm. The protein localises to the cytoskeleton. Its subcellular location is the cell membrane. Functionally, membrane-cytoskeleton-associated protein that promotes the assembly of the spectrin-actin network. Binds to calmodulin. This is Alpha-adducin (Add1) from Mus musculus (Mouse).